We begin with the raw amino-acid sequence, 127 residues long: Glycine cleavage system H protein (127 aa).

Positions 22-104 (AVVIGITHFA…YEGAWMVKVE (83 aa)) constitute a Lipoyl-binding domain. Position 63 is an N6-lipoyllysine (K63).

It belongs to the GcvH family. The glycine cleavage system is composed of four proteins: P, T, L and H. (R)-lipoate is required as a cofactor.

Functionally, the glycine cleavage system catalyzes the degradation of glycine. The H protein shuttles the methylamine group of glycine from the P protein to the T protein. Is also involved in protein lipoylation via its role as an octanoyl/lipoyl carrier protein intermediate. This Bacillus mycoides (strain KBAB4) (Bacillus weihenstephanensis) protein is Glycine cleavage system H protein.